The following is a 154-amino-acid chain: UPF0225 protein YPDSF_0962 (154 aa).

It belongs to the UPF0225 family.

The sequence is that of UPF0225 protein YPDSF_0962 from Yersinia pestis (strain Pestoides F).